The following is a 69-amino-acid chain: Conotoxin SIVA (69 aa).

An N-terminal signal peptide occupies residues methionine 1–serine 21. Positions threonine 22–arginine 38 are excised as a propeptide. Glutamine 39 is modified (pyrrolidone carboxylic acid). O-linked (HexNAc...) serine glycosylation is present at serine 45. 3 positions are modified to 4-hydroxyproline: proline 55, proline 60, and proline 61. Cysteine 68 is subject to Cysteine amide.

It belongs to the conotoxin A superfamily. Post-translationally, contains 3 disulfide bonds. In terms of processing, O-linked glycan consists of Hex3-HexNAc2 pentasaccharide. In terms of tissue distribution, expressed by the venom duct.

The protein resides in the secreted. Its function is as follows. Neurotoxin with probable activity on sodium channel. Induces intense repetitive firing of the frog neuromuscular junction, leading to a tetanic contracture in muscle fiber (spastic paralysis). In vivo, shows the same effect as the whole venom when injected on fish. Intraperitoneal injection into fish induces a period of rapid swimming followed by a spastic paralysis with stiff fibrillating fins. At high doses, the peptide is lethal to both fish and mice. The protein is Conotoxin SIVA of Conus striatus (Striated cone).